The primary structure comprises 423 residues: uncharacterized protein (423 aa).

This is an uncharacterized protein from Rhizobium meliloti (strain 1021) (Ensifer meliloti).